Here is a 1494-residue protein sequence, read N- to C-terminus: Serine/threonine-protein kinase VPS15 (1494 aa).

Gly-2 carries the N-myristoyl glycine lipid modification. Positions 27 to 307 (LVLKEVLGRG…VFPNYFSPFL (281 aa)) constitute a Protein kinase domain. ATP is bound by residues 33-41 (LGRGRFLKS) and Lys-54. The Proton acceptor role is filled by Asp-149. HEAT repeat units follow at residues 383 to 421 (NSKDEIFYSISDALKKNRHPFLKKITMDDLGTLMSLYDS), 480 to 517 (DRLQRVLPYVVALLSDPTAIVRCAAMETLCDILPLVRD), 524 to 562 (KIFPEYIFPMLSMLPEDTEESVRICYASNIAKLALTAYG), 610 to 646 (KTIAEVVQELVMGPKQTPNVRRALLQDIGELCFFFGQ), 648 to 685 (QSNDFLLPILPAFLNDRDEQLRSVFFEKIVYVCFFVGQ), 687 to 724 (SVEEYLLPYIDQALSDQTEAVIVNALECLSTLCKSSFL), and 727 to 764 (RALLQMIECVYPLLCYPSQWVRRAVVTFIAASSECLGA). 2 disordered regions span residues 859–903 (QSVE…TVEL) and 1037–1064 (SASVTSEDASSPADLVGEPSLSRTSVPD). A compositionally biased stretch (low complexity) spans 1037-1047 (SASVTSEDASS). WD repeat units lie at residues 1079-1118 (EHRSAVNDIATSSDHSFFVSASDDSTVKVWDSRKLEKDIS), 1127-1166 (LEGSRGMCTTMLRNSTQVVVGASDGVIHMFSIDHISRGLG), 1184-1226 (KEGA…DAWT), 1231-1270 (PEEGYVSSLVTSPCGNWFVSGSSRGVLTLWDLRFRVPVNS), 1276-1323 (ICPI…CHQV), 1371-1409 (PRLPGIRSLLPLPGGDLLTGGTDLKIRRWDYSSPERSYC), and 1466-1494 (DSVQSLASVKLNQRLLISSSRDGAIKVWK).

Belongs to the protein kinase superfamily. Ser/Thr protein kinase family. Interacts with VPS34. Component of a complex made of VPS38/USL1 and PI3K main subunits such as VPS15, ATG6/VPS30 and VPS34. Post-translationally, autophosphorylated. In terms of tissue distribution, mainly expressed in anthers, pollen grains and pollen tubes, and, to a lower extent, in other tissues and organs including seedlings, roots, stems, leaves, flowers, pitils and siliques.

The protein localises to the cytoplasm. The protein resides in the golgi apparatus. It is found in the trans-Golgi network membrane. Its subcellular location is the endosome membrane. It catalyses the reaction L-seryl-[protein] + ATP = O-phospho-L-seryl-[protein] + ADP + H(+). The catalysed reaction is L-threonyl-[protein] + ATP = O-phospho-L-threonyl-[protein] + ADP + H(+). Serine/threonine-protein kinase required for cytoplasm to vacuole transport (Cvt) and autophagy as a part of the autophagy-specific VPS34 PI3-kinase complex I. Required for pollen development and germination, probably via the modulation of phosphatidylinositol 3-phosphate (PI3P) formation and vacuolar organization. This Arabidopsis thaliana (Mouse-ear cress) protein is Serine/threonine-protein kinase VPS15.